The sequence spans 538 residues: Cytochrome P450 monooxygenase fogE (538 aa).

The helical transmembrane segment at 4-24 (ASSAILLVALIAALWRLSLIG) threads the bilayer. Cys-437 is a heme binding site.

Belongs to the cytochrome P450 family. Requires heme as cofactor.

The protein localises to the membrane. Its pathway is secondary metabolite biosynthesis. Its function is as follows. Cytochrome P450 monooxygenase; part of the gene cluster that mediates the biosynthesis of flavoglaucin and congeners (including aspergin, dihydroauroglaucin and auroglaucin), prenylated salicylaldehyde derivatives carrying a saturated or an unsaturated C-7 side chain. The PKS fogA releases the carboxylic acid (8E,10E,12E)-3,5,7-trihydroxytetradeca-8,10,12-trienoic acid as its product, as well as derivatives with one and two double bonds. FogA is indeed able to reduce the initial triketide, thus being at least partially responsible for the differently saturated heptyl side chains of flavoglaucin congeners. The oxidoreductases fogB, fogC and fogD modify the nascent polyketide in fogA-bound form and, together, fogA, fogB, fogC and fogD are necessary for the formation of the aromatic core and the cyclized PKS products are released as salicyl alcohols. In particular, fogB is responsible for oxidation of a hydroxyl group or reduction of remaining double bond(s) at the C-7 residue whereas fogD is probably involved in the reductive release of the modified PKS products. The cytochrome P450 monooxygenase fogE is then responsible for the hydroxylation at C-3 of the benzene ring. The fogE products are substrates of the prenyltransferase fogH and the prenylated benzyl alcohols are subsequently oxidized by the fogF to produce the final aryl aldehydes flavoglaucin and congeners. The short-chain dehydrogenase fogG does not seem to be involved in the biosynthesis of the prenylated salicylaldehyde derivatives. This Aspergillus ruber (strain CBS 135680) protein is Cytochrome P450 monooxygenase fogE.